The chain runs to 567 residues: Potassium-transporting ATPase potassium-binding subunit (567 aa).

Transmembrane regions (helical) follow at residues 3-23 (MIGW…TKPL), 64-84 (LTYT…IYGV), 136-156 (GLTH…MALI), 179-199 (LYVL…QGIP), 220-240 (VGPV…GGFF), 254-274 (LSNF…TNVF), 285-305 (WAIL…TYWA), 330-350 (FGLV…CGAV), 374-394 (IIVG…VLAI), 420-440 (AMLA…VGVV), 488-508 (LASA…AIAG), and 527-547 (GGLF…LTFF).

Belongs to the KdpA family. The system is composed of three essential subunits: KdpA, KdpB and KdpC.

It localises to the cell inner membrane. Functionally, part of the high-affinity ATP-driven potassium transport (or Kdp) system, which catalyzes the hydrolysis of ATP coupled with the electrogenic transport of potassium into the cytoplasm. This subunit binds the periplasmic potassium ions and delivers the ions to the membrane domain of KdpB through an intramembrane tunnel. This is Potassium-transporting ATPase potassium-binding subunit from Bradyrhizobium diazoefficiens (strain JCM 10833 / BCRC 13528 / IAM 13628 / NBRC 14792 / USDA 110).